The primary structure comprises 401 residues: Probable tRNA sulfurtransferase (401 aa).

Residues 60-165 form the THUMP domain; it reads EALFPHLKQV…EEATFLTIRD (106 aa). ATP contacts are provided by residues 183–184, 208–209, Arg265, Gly287, and Gln296; these read ML and HF.

This sequence belongs to the ThiI family.

The protein localises to the cytoplasm. The catalysed reaction is [ThiI sulfur-carrier protein]-S-sulfanyl-L-cysteine + a uridine in tRNA + 2 reduced [2Fe-2S]-[ferredoxin] + ATP + H(+) = [ThiI sulfur-carrier protein]-L-cysteine + a 4-thiouridine in tRNA + 2 oxidized [2Fe-2S]-[ferredoxin] + AMP + diphosphate. The enzyme catalyses [ThiS sulfur-carrier protein]-C-terminal Gly-Gly-AMP + S-sulfanyl-L-cysteinyl-[cysteine desulfurase] + AH2 = [ThiS sulfur-carrier protein]-C-terminal-Gly-aminoethanethioate + L-cysteinyl-[cysteine desulfurase] + A + AMP + 2 H(+). The protein operates within cofactor biosynthesis; thiamine diphosphate biosynthesis. Its function is as follows. Catalyzes the ATP-dependent transfer of a sulfur to tRNA to produce 4-thiouridine in position 8 of tRNAs, which functions as a near-UV photosensor. Also catalyzes the transfer of sulfur to the sulfur carrier protein ThiS, forming ThiS-thiocarboxylate. This is a step in the synthesis of thiazole, in the thiamine biosynthesis pathway. The sulfur is donated as persulfide by IscS. This chain is Probable tRNA sulfurtransferase, found in Bacillus subtilis (strain 168).